A 494-amino-acid chain; its full sequence is Monocarboxylate transporter 1 (494 aa).

Topologically, residues Met1 to Val22 are cytoplasmic. Residues Val23–Phe44 form a helical membrane-spanning segment. Residue Lys38 coordinates (S)-lactate. The Extracellular portion of the chain corresponds to Lys45 to Thr55. Residues Ser56–Val80 traverse the membrane as a helical segment. Residues Asn81–Gly84 are Cytoplasmic-facing. Residues Ser85–Phe105 form a helical membrane-spanning segment. The Extracellular portion of the chain corresponds to Cys106–Val109. A helical transmembrane segment spans residues Gln110–Leu132. Residues Thr133 to Ala146 are Cytoplasmic-facing. The chain crosses the membrane as a helical span at residues Asn147–Phe169. Residues Gly170 to Trp174 lie on the Extracellular side of the membrane. Residues Arg175–Leu194 form a helical membrane-spanning segment. The Cytoplasmic portion of the chain corresponds to Met195–Arg254. Residues Ser210, Ser213, and Ser220 each carry the phosphoserine modification. Thr224 carries the phosphothreonine modification. A Phosphoserine modification is found at Ser230. A helical transmembrane segment spans residues Gly255–Gly281. At Lys282–Ser288 the chain is on the extracellular side. A helical transmembrane segment spans residues Glu289–Gly310. Asp302 contributes to the H(+) binding site. (S)-lactate is bound at residue Arg306. The Cytoplasmic segment spans residues Leu311 to Arg321. The chain crosses the membrane as a helical span at residues Val322–Leu342. The Extracellular segment spans residues Ser343–Tyr346. A helical membrane pass occupies residues Val347 to Phe368. Residues Glu369 to Ser382 are Cytoplasmic-facing. The helical transmembrane segment at Ala383–Gly403 threads the bilayer. Over Arg404 to Tyr414 the chain is Extracellular. A helical transmembrane segment spans residues Thr415 to Ile436. Residues Asn437–Val494 lie on the Cytoplasmic side of the membrane. Residues Lys446–Lys472 show a composition bias toward basic and acidic residues. A disordered region spans residues Lys446–Val494. Thr459 bears the Phosphothreonine mark. At Ser460 the chain carries Phosphoserine. Thr461 is modified (phosphothreonine). The span at Glu473 to Gly485 shows a compositional bias: polar residues. 4 positions are modified to phosphoserine: Ser476, Ser483, Ser484, and Ser492.

The protein belongs to the major facilitator superfamily. Monocarboxylate porter (TC 2.A.1.13) family. As to quaternary structure, interacts with BSG. Interacts with EMB. Interaction with either BSG or EMB is required for expression at the cell membrane. As to expression, detected in erythrocytes (at protein level). Detected in brain, heart, kidney, lung, muscle, jejunum enterocytes and brain capillaries.

The protein resides in the cell membrane. The protein localises to the basolateral cell membrane. Its subcellular location is the apical cell membrane. It catalyses the reaction (S)-lactate(in) + H(+)(in) = (S)-lactate(out) + H(+)(out). The enzyme catalyses pyruvate(out) + H(+)(out) = pyruvate(in) + H(+)(in). The catalysed reaction is acetoacetate(out) + H(+)(out) = acetoacetate(in) + H(+)(in). It carries out the reaction (S)-3-hydroxybutanoate(out) + H(+)(out) = (S)-3-hydroxybutanoate(in) + H(+)(in). It catalyses the reaction (R)-3-hydroxybutanoate(out) + H(+)(out) = (R)-3-hydroxybutanoate(in) + H(+)(in). The enzyme catalyses 3-methyl-2-oxobutanoate(out) + H(+)(out) = 3-methyl-2-oxobutanoate(in) + H(+)(in). The catalysed reaction is 4-methyl-2-oxopentanoate(out) + H(+)(out) = 4-methyl-2-oxopentanoate(in) + H(+)(in). Inhibited by stilbene disulfonates, such as di-isothiocyanostilbene disulfonate(DIDS), a cross-linking reagent that forms covalent linkages with lysine groups. Functionally, bidirectional proton-coupled monocarboxylate transporter. Catalyzes the rapid transport across the plasma membrane of many monocarboxylates such as lactate, pyruvate, acetate and the ketone bodies acetoacetate and beta-hydroxybutyrate, and thus contributes to the maintenance of intracellular pH. The transport direction is determined by the proton motive force and the concentration gradient of the substrate monocarboxylate. MCT1 is a major lactate exporter. Plays a role in cellular responses to a high-fat diet by modulating the cellular levels of lactate and pyruvate that contribute to the regulation of central metabolic pathways and insulin secretion, with concomitant effects on plasma insulin levels and blood glucose homeostasis. Facilitates the protonated monocarboxylate form of succinate export, that its transient protonation upon muscle cell acidification in exercising muscle and ischemic heart. Functions via alternate outward- and inward-open conformation states. Protonation and deprotonation of 302-Asp is essential for the conformational transition. The polypeptide is Monocarboxylate transporter 1 (Slc16a1) (Rattus norvegicus (Rat)).